Reading from the N-terminus, the 327-residue chain is Microtubule-associated protein RP/EB family member 2 (327 aa).

A disordered region spans residues 1–21 (MPGPTQTLSPNGENNNDIIQD). Pro2 is modified (N-acetylalanine). Residue Ser9 is modified to Phosphoserine. Residues 57 to 159 (TMSRHDIIAW…FIQWFKKFYD (103 aa)) form the Calponin-homology (CH) domain. Tyr167 bears the Phosphotyrosine mark. Disordered regions lie at residues 171–240 (EARQ…DKDL) and 299–327 (ASEE…QEEY). The DCTN1-binding stretch occupies residues 187–327 (QIFNLPKKSH…EQQPPQQEEY (141 aa)). Positions 200–234 (SPTAGAAKSSPAAKPGSTPSRPSSAKRASSSGSAS) are enriched in low complexity. Phosphoserine is present on residues Ser219 and Ser236. The EB1 C-terminal domain maps to 236–306 (SDKDLETQVI…LYASEEHEGH (71 aa)). The APC-binding stretch occupies residues 259-302 (EGVEKERDFYFGKLREIELLCQEHGQENDDLVQRLMDILYASEE). Basic and acidic residues predominate over residues 300-317 (SEEHEGHTEEPEAEEQAH). Low complexity predominate over residues 318 to 327 (EQQPPQQEEY).

This sequence belongs to the MAPRE family. In terms of assembly, interacts with DCTN1. Interacts with APC (via C-terminal). Interacts with monomeric and polymerized tubulin. Interacts with SLAIN1. Interacts (via the N-terminal region) with BAG1. Interacts with ASB14. Interacts with HAX1; this interaction is essential for epidermal cell migration. In terms of processing, phosphorylated at Ser-236 by CK2 leading to enhanced cell adhesion. Phosphorylated by CDK1 and AURKB during mitosis reduces the binding affinity of MAPRE2 for microtubules. Post-translationally, ubiquitinated in an ASB14-dependent manner; leading to proteasomal degradation. In terms of tissue distribution, expressed in different tumor cell lines. Up-regulated in activated B- and T-lymphocytes.

It is found in the cytoplasm. Its subcellular location is the cytoskeleton. Adapter protein that is involved in microtubule polymerization, and spindle function by stabilizing microtubules and anchoring them at centrosomes. Therefore, ensures mitotic progression and genome stability. Acts as a central regulator of microtubule reorganization in apico-basal epithelial differentiation. Plays a role during oocyte meiosis by regulating microtubule dynamics. Participates in neurite growth by interacting with plexin B3/PLXNB3 and microtubule reorganization during apico-basal epithelial differentiation. Also plays an essential role for cell migration and focal adhesion dynamics. Mechanistically, recruits HAX1 to microtubules in order to regulate focal adhesion dynamics. The polypeptide is Microtubule-associated protein RP/EB family member 2 (MAPRE2) (Homo sapiens (Human)).